The sequence spans 411 residues: Arginine biosynthesis bifunctional protein ArgJ (411 aa).

Residues Thr-160, Lys-186, Thr-197, Glu-283, Asn-406, and Thr-411 each coordinate substrate. Thr-197 functions as the Nucleophile in the catalytic mechanism.

Belongs to the ArgJ family. Heterotetramer of two alpha and two beta chains.

The protein resides in the cytoplasm. It catalyses the reaction N(2)-acetyl-L-ornithine + L-glutamate = N-acetyl-L-glutamate + L-ornithine. It carries out the reaction L-glutamate + acetyl-CoA = N-acetyl-L-glutamate + CoA + H(+). Its pathway is amino-acid biosynthesis; L-arginine biosynthesis; L-ornithine and N-acetyl-L-glutamate from L-glutamate and N(2)-acetyl-L-ornithine (cyclic): step 1/1. The protein operates within amino-acid biosynthesis; L-arginine biosynthesis; N(2)-acetyl-L-ornithine from L-glutamate: step 1/4. Its activity is regulated as follows. Feedback inhibition by L-ornithine. Functionally, catalyzes two activities which are involved in the cyclic version of arginine biosynthesis: the synthesis of N-acetylglutamate from glutamate and acetyl-CoA as the acetyl donor, and of ornithine by transacetylation between N(2)-acetylornithine and glutamate. The polypeptide is Arginine biosynthesis bifunctional protein ArgJ (Halalkalibacterium halodurans (strain ATCC BAA-125 / DSM 18197 / FERM 7344 / JCM 9153 / C-125) (Bacillus halodurans)).